The following is a 146-amino-acid chain: uncharacterized protein (146 aa).

The 137-residue stretch at 1-137 folds into the HTH marR-type domain; that stretch reads MLSQEFFNSF…TINVMNQIHK (137 aa).

This is an uncharacterized protein from Staphylococcus aureus (strain MW2).